The chain runs to 37 residues: Antifungal protein S (37 aa).

It belongs to the thaumatin family.

In terms of biological role, has antifungal activity. Inhibits the growth of Trichoderma viridae and Candida albicans. This is Antifungal protein S from Hordeum vulgare (Barley).